The chain runs to 1147 residues: MACPWKFLFRVKSYQGDLKEEKDINNNVEKTPGAIPSPTTQDDPKSHKHQNGFPQFLTGTAQNVPESLDKLHVTPSTRPQHVRIKNWGNGEIFHDTLHHKATSDISCKSKLCMGSIMNSKSLTRGPRDKPTPVEELLPQAIEFINQYYGSFKEAKIEEHLARLEAVTKEIETTGTYQLTLDELIFATKMAWRNAPRCIGRIQWSNLQVFDARSCSTASEMFQHICRHILYATNSGNIRSAITVFPQRSDGKHDFRIWNSQLIRYAGYQMPDGTIRGDPATLEFTQLCIDLGWKPRYGRFDVLPLVLQAHGQDPEVFEIPPDLVLEVTMEHPKYEWFQELGLKWYALPAVANMLLEVGGLEFPACPFNGWYMGTEIGVRDFCDTQRYNILEEVGRRMGLETHTLASLWKDRAVTEINAAVLHSFQKQNVTIMDHHTASESFMKHMQNEYRARGGCPADWIWLVPPVSGSITPVFHQEMLNYVLSPFYYYQIEPWKTHIWQDEKLRPRRREIRFTVLVKAVFFASVLMRKVMASRVRATVLFATETGKSEALARDLAALFSYAFNTKVVCMEQYKANTLEEEQLLLVVTSTFGNGDCPSNGQTLKKSLFMMKELGHTFRYAVFGLGSSMYPQFCAFAHDIDQKLSHLGASQLAPTGEGDELSGQEDAFRSWAVQTFRAACETFDVRSKHCIQIPKRYTSNATWEPEQYKLTQSPESLDLNKALSSIHAKNVFTMRLKSLQNLQSEKSSRTTLLVQLTFEGSRGPSYLPGEHLGIFPGNQTALVQGILERVVDCSSPDQTVCLEVLDESGSYWVKDKRLPPCSLRQALTYFLDITTPPTQLQLHKLARFATEETHRQRLEALCQPSEYNDWKFSNNPTFLEVLEEFPSLRVPAAFLLSQLPILKPRYYSISSSQDHTPSEVHLTVAVVTYRTRDGQGPLHHGVCSTWINNLKPEDPVPCFVRSVSGFQLPEDPSQPCILIGPGTGIAPFRSFWQQRLHDSQHRGLKGGRMTLVFGCRHPEEDHLYQEEMQEMVRKGVLFQVHTGYSRLPGKPKVYVQDILQKELADEVFSVLHGEQGHLYVCGDVRMARDVATTLKKLVAAKLNLSEEQVEDYFFQLKSQKRYHEDIFGAVFSYGAKKGNTLEEPKGTRL.

Residues 22–51 (KDINNNVEKTPGAIPSPTTQDDPKSHKHQN) form a disordered region. The DINNN-motif; mediates interaction with SPSB1, SPSB2 and SPSB4 signature appears at 23–27 (DINNN). Cys107 and Cys112 together coordinate Zn(2+). Ser115 lines the (6R)-L-erythro-5,6,7,8-tetrahydrobiopterin pocket. Heme b is bound at residue Cys197. L-arginine-binding residues include Gln260, Trp369, Tyr370, and Glu374. (6R)-L-erythro-5,6,7,8-tetrahydrobiopterin-binding residues include Arg378, Ile459, Trp460, and Phe473. A heme b-binding site is contributed by Tyr488. Positions 512–532 (FTVLVKAVFFASVLMRKVMAS) are calmodulin-binding. The Flavodoxin-like domain maps to 536 to 674 (ATVLFATETG…AFRSWAVQTF (139 aa)). FMN contacts are provided by Thr542, Glu543, Thr544, Lys546, and Ser547. Thr564 carries the phosphothreonine modification. The residue at position 572 (Tyr572) is a Phosphotyrosine. FMN is bound by residues Ser588, Thr589, Ser625, Cys632, Glu658, and Gln662. The region spanning 727-967 (KNVFTMRLKS…VRSVSGFQLP (241 aa)) is the FAD-binding FR-type domain. Arg747 lines the NADP(+) pocket. His769, Arg903, Tyr905, Ser906, Thr921, and Ala923 together coordinate FAD. Thr926 serves as a coordination point for NADP(+). The FAD site is built by Tyr927, Val940, Cys941, and Ser942. The NADP(+) site is built by Thr981, Arg1014, Ser1043, Arg1044, Lys1050, Tyr1052, Gln1054, and Asp1087.

This sequence belongs to the NOS family. Homodimer. Interacts with NHERF1. Interacts with GAPDH; induced by oxidatively-modified low-densitity lipoprotein (LDL(ox)). Interacts with S100A8 and S100A9 to form the iNOS-S100A8/9 transnitrosylase complex. Interacts with SPSB1, SPSB2 and SPSB4. Interacts with ELOC and CUL5 in the presence of SPSB1 or SPSB2 or SPSB4. Forms a complex with ASL, ASS1 and HSP90AA1; the complex regulates cell-autonomous L-arginine synthesis and citrulline recycling while channeling extracellular L-arginine to nitric oxide synthesis pathway. It depends on heme b as a cofactor. Requires FAD as cofactor. The cofactor is FMN. (6R)-L-erythro-5,6,7,8-tetrahydrobiopterin is required as a cofactor. In terms of processing, polyubiquitinated; mediated by SPSB1, SPSB2 and SPSB4, leading to proteasomal degradation. As to expression, in normal kidney, expressed primarily in the medullary thick ascending limb, with minor amounts in the medullary collecting duct and vasa recta bundle.

It is found in the cytoplasm. The protein localises to the cytosol. The catalysed reaction is 2 L-arginine + 3 NADPH + 4 O2 + H(+) = 2 L-citrulline + 2 nitric oxide + 3 NADP(+) + 4 H2O. With respect to regulation, not stimulated by calcium/calmodulin. Aspirin inhibits expression and function of this enzyme and effects may be exerted at the level of translational/post-translational modification and directly on the catalytic activity. Functionally, produces nitric oxide (NO) which is a messenger molecule with diverse functions throughout the body. In macrophages, NO mediates tumoricidal and bactericidal actions. Also has nitrosylase activity and mediates cysteine S-nitrosylation of cytoplasmic target proteins such PTGS2/COX2. As component of the iNOS-S100A8/9 transnitrosylase complex involved in the selective inflammatory stimulus-dependent S-nitrosylation of GAPDH implicated in regulation of the GAIT complex activity and probably multiple targets including ANXA5, EZR, MSN and VIM. Involved in inflammation, enhances the synthesis of pro-inflammatory mediators such as IL6 and IL8. The chain is Nitric oxide synthase, inducible (Nos2) from Rattus norvegicus (Rat).